A 358-amino-acid chain; its full sequence is MEPNGTVHSCCLDSMALKVTISVVLTTLILITIAGNVVVCLAVSLNRRLRSLTNCFIVSLAATDLLLGLLVLPFSAIYQLSFTWSFGHVFCNIYTSLDVMLCTASILNLFMISLDRYCAVTDPLRYPVLVTPVRVAISLVFIWVISITLSFLSIHLGWNSRNGTRGGNDTFKCKVQVNEVYGLVDGLVTFYLPLLIMCVTYYRIFKIAREQAKRINHISSWKAATIREHKATVTLAAVMGAFIICWFPYFTAFVYRGLRGDDAINEAVEGIVLWLGYANSALNPILYAALNRDFRTAYQQLFHCKFASHNSHKTSLRLNNSLLPRSQSREGRWQEEKPLKLQVWSGTELTHPQGNPIR.

Over 1-22 the chain is Extracellular; that stretch reads MEPNGTVHSCCLDSMALKVTIS. N-linked (GlcNAc...) asparagine glycosylation is present at Asn4. Residues 23-44 form a helical membrane-spanning segment; the sequence is VVLTTLILITIAGNVVVCLAVS. Over 45-57 the chain is Cytoplasmic; that stretch reads LNRRLRSLTNCFI. A helical membrane pass occupies residues 58–81; that stretch reads VSLAATDLLLGLLVLPFSAIYQLS. The Extracellular portion of the chain corresponds to 82–92; the sequence is FTWSFGHVFCN. The cysteines at positions 91 and 173 are disulfide-linked. The chain crosses the membrane as a helical span at residues 93-114; the sequence is IYTSLDVMLCTASILNLFMISL. Topologically, residues 115-134 are cytoplasmic; sequence DRYCAVTDPLRYPVLVTPVR. A helical transmembrane segment spans residues 135–159; it reads VAISLVFIWVISITLSFLSIHLGWN. Over 160-179 the chain is Extracellular; that stretch reads SRNGTRGGNDTFKCKVQVNE. The chain crosses the membrane as a helical span at residues 180–203; sequence VYGLVDGLVTFYLPLLIMCVTYYR. The Cytoplasmic portion of the chain corresponds to 204-233; that stretch reads IFKIAREQAKRINHISSWKAATIREHKATV. The chain crosses the membrane as a helical span at residues 234-257; it reads TLAAVMGAFIICWFPYFTAFVYRG. At 258–266 the chain is on the extracellular side; the sequence is LRGDDAINE. A helical membrane pass occupies residues 267–288; the sequence is AVEGIVLWLGYANSALNPILYA. Residues 289-358 are Cytoplasmic-facing; it reads ALNRDFRTAY…LTHPQGNPIR (70 aa). Cys304 is lipidated: S-palmitoyl cysteine.

It belongs to the G-protein coupled receptor 1 family.

It localises to the cell membrane. The H2 subclass of histamine receptors mediates gastric acid secretion. The activity of this receptor is mediated by G proteins which activate adenylyl cyclase. The polypeptide is Histamine H2 receptor (Hrh2) (Rattus norvegicus (Rat)).